The sequence spans 320 residues: R2-like ligand binding oxidase (320 aa).

Glu-68, Glu-101, and His-104 together coordinate Mn(2+). Residues 71-162 (VTKDIQPFMS…AAQVRASVVY (92 aa)) constitute a cross-link (3-(O4'-tyrosyl)-valine (Val-Tyr)). A Fe cation-binding site is contributed by Glu-101. Residues Glu-167, Glu-202, and His-205 each coordinate Fe cation.

Belongs to the ribonucleoside diphosphate reductase small chain family. R2-like ligand binding oxidase subfamily. Homodimer. It depends on Fe cation as a cofactor. Mn(2+) is required as a cofactor.

In terms of biological role, probable oxidase that might be involved in lipid metabolism. This chain is R2-like ligand binding oxidase (nrdB), found in Mycolicibacterium smegmatis (strain ATCC 700084 / mc(2)155) (Mycobacterium smegmatis).